A 186-amino-acid chain; its full sequence is Peptidyl-tRNA hydrolase (186 aa).

Tyrosine 13 is a binding site for tRNA. The active-site Proton acceptor is histidine 18. TRNA contacts are provided by tyrosine 59, asparagine 61, and asparagine 107.

It belongs to the PTH family. Monomer.

It localises to the cytoplasm. It catalyses the reaction an N-acyl-L-alpha-aminoacyl-tRNA + H2O = an N-acyl-L-amino acid + a tRNA + H(+). Functionally, hydrolyzes ribosome-free peptidyl-tRNAs (with 1 or more amino acids incorporated), which drop off the ribosome during protein synthesis, or as a result of ribosome stalling. Catalyzes the release of premature peptidyl moieties from peptidyl-tRNA molecules trapped in stalled 50S ribosomal subunits, and thus maintains levels of free tRNAs and 50S ribosomes. This chain is Peptidyl-tRNA hydrolase, found in Thermotoga sp. (strain RQ2).